A 637-amino-acid polypeptide reads, in one-letter code: tRNA-dihydrouridine(47) synthase [NAD(P)(+)]-like (637 aa).

Disordered regions lie at residues 1-21 (MAET…ACER), 41-63 (LDGD…EPGA), and 85-105 (ERQV…VKPA). Over residues 89 to 104 (PKRARGQNKSRPHVKP) the composition is skewed to basic residues. 2 consecutive C3H1-type zinc fingers follow at residues 107–137 (YDKD…HDVG) and 145–175 (ADLG…HLGP). Residue Thr-260 is modified to Phosphothreonine. Phosphoserine is present on residues Ser-263 and Ser-264. FMN-binding positions include 298-300 (PLT) and Gln-352. Cys-383 serves as the catalytic Proton donor. Lys-403 participates in a covalent cross-link: Glycyl lysine isopeptide (Lys-Gly) (interchain with G-Cter in SUMO2). FMN-binding positions include Lys-422, His-452, 484–486 (NGD), and 507–508 (AR).

The protein belongs to the Dus family. Dus3 subfamily. The cofactor is FMN.

The enzyme catalyses 5,6-dihydrouridine(47) in tRNA + NAD(+) = uridine(47) in tRNA + NADH + H(+). It catalyses the reaction 5,6-dihydrouridine(47) in tRNA + NADP(+) = uridine(47) in tRNA + NADPH + H(+). It carries out the reaction a 5,6-dihydrouridine in mRNA + NAD(+) = a uridine in mRNA + NADH + H(+). The catalysed reaction is a 5,6-dihydrouridine in mRNA + NADP(+) = a uridine in mRNA + NADPH + H(+). Functionally, catalyzes the synthesis of dihydrouridine, a modified base, in various RNAs, such as tRNAs, mRNAs and some long non-coding RNAs (lncRNAs). Mainly modifies the uridine in position 47 (U47) in the D-loop of most cytoplasmic tRNAs. Also able to mediate the formation of dihydrouridine in some mRNAs, thereby regulating their translation. This Mus musculus (Mouse) protein is tRNA-dihydrouridine(47) synthase [NAD(P)(+)]-like.